A 100-amino-acid chain; its full sequence is MPNKKSAEKRVRQSEQRRQKNRGYQKRIKEISKEIDKKIHENAEREELMQLLSKSFKIIDTAKSHGAVHKNYAARKKSKLHLKVKKYLGEMAPESSPVNE.

Residues 1-18 (MPNKKSAEKRVRQSEQRR) show a composition bias toward basic and acidic residues. The interval 1-26 (MPNKKSAEKRVRQSEQRRQKNRGYQK) is disordered.

Belongs to the bacterial ribosomal protein bS20 family.

Its function is as follows. Binds directly to 16S ribosomal RNA. This Petrotoga mobilis (strain DSM 10674 / SJ95) protein is Small ribosomal subunit protein bS20.